A 426-amino-acid polypeptide reads, in one-letter code: Histidine--tRNA ligase (426 aa).

It belongs to the class-II aminoacyl-tRNA synthetase family. As to quaternary structure, homodimer.

It localises to the cytoplasm. The enzyme catalyses tRNA(His) + L-histidine + ATP = L-histidyl-tRNA(His) + AMP + diphosphate + H(+). The polypeptide is Histidine--tRNA ligase (Picosynechococcus sp. (strain ATCC 27264 / PCC 7002 / PR-6) (Agmenellum quadruplicatum)).